Here is a 267-residue protein sequence, read N- to C-terminus: Energy-coupling factor transporter transmembrane protein EcfT (267 aa).

5 consecutive transmembrane segments (helical) span residues 30-50 (FWYVVIIFFAKGPLTYLLLVA), 67-87 (WAGLKPLLWVIGLTIAIQVLF), 110-130 (ALVILARFILIVLASTVLTAT), 152-172 (VPVNQIAMMISIALRFIPTIM), and 247-267 (SIALAVVVIVSVLFFVARILL).

The protein belongs to the energy-coupling factor EcfT family. As to quaternary structure, forms a stable energy-coupling factor (ECF) transporter complex composed of 2 membrane-embedded substrate-binding proteins (S component), 2 ATP-binding proteins (A component) and 2 transmembrane proteins (T component). May be able to interact with more than 1 S component at a time.

It is found in the cell membrane. Its function is as follows. Transmembrane (T) component of an energy-coupling factor (ECF) ABC-transporter complex. Unlike classic ABC transporters this ECF transporter provides the energy necessary to transport a number of different substrates. This chain is Energy-coupling factor transporter transmembrane protein EcfT, found in Limosilactobacillus fermentum (strain CECT 5716 / Lc40) (Lactobacillus fermentum).